Here is a 412-residue protein sequence, read N- to C-terminus: Tyrosine--tRNA ligase (412 aa).

Position 41 (Tyr41) interacts with L-tyrosine. The 'HIGH' region signature appears at 46–55 (ATADSLHVGH). L-tyrosine is bound by residues Tyr174 and Gln178. Residues 234-238 (KMGKS) carry the 'KMSKS' region motif. Lys237 is a binding site for ATP. The region spanning 348 to 411 (LSLTDLLLEH…KKQHLHLRLE (64 aa)) is the S4 RNA-binding domain.

Belongs to the class-I aminoacyl-tRNA synthetase family. TyrS type 1 subfamily. In terms of assembly, homodimer.

It localises to the cytoplasm. It carries out the reaction tRNA(Tyr) + L-tyrosine + ATP = L-tyrosyl-tRNA(Tyr) + AMP + diphosphate + H(+). Catalyzes the attachment of tyrosine to tRNA(Tyr) in a two-step reaction: tyrosine is first activated by ATP to form Tyr-AMP and then transferred to the acceptor end of tRNA(Tyr). The polypeptide is Tyrosine--tRNA ligase (Pseudomonas aeruginosa (strain LESB58)).